A 283-amino-acid polypeptide reads, in one-letter code: Protein boule-like (283 aa).

Residues Met-1–Pro-25 are disordered. Positions Asn-33–Arg-110 constitute an RRM domain. Residues Pro-160–Gln-184 enclose the DAZ domain.

Belongs to the RRM DAZ family. In terms of assembly, interacts with DAZ1 and DAZL.

Its subcellular location is the cytoplasm. Probable RNA-binding protein, which may be required during spermatogenesis. May act by binding to the 3'-UTR of mRNAs and regulating their translation. This is Protein boule-like (BOLL) from Macaca fascicularis (Crab-eating macaque).